Here is an 85-residue protein sequence, read N- to C-terminus: Kunitz-type serine protease inhibitor homolog beta-bungarotoxin B1 chain (85 aa).

The first 24 residues, 1–24, serve as a signal peptide directing secretion; the sequence is MSSGGLLLLLGLLTLCAELTPVSS. The BPTI/Kunitz inhibitor domain maps to 31-81; it reads CDKPPDKGNCGSVRRAFYYDTRLKTCKAFPYRGCNGNGNHFKTETLCRCEC. 3 disulfide bridges follow: Cys-31-Cys-81, Cys-40-Cys-64, and Cys-56-Cys-77.

The protein belongs to the venom Kunitz-type family. Heterodimer; disulfide-linked. The A chain has phospholipase A2 activity and the B chain shows homology with the basic protease inhibitors. In terms of tissue distribution, expressed by the venom gland.

Its subcellular location is the secreted. Functionally, beta-bungarotoxin is a presynaptic neurotoxin of the venom. The B chain is homologous to venom basic protease inhibitors but has no protease inhibitor activity and is non-toxic. The protein is Kunitz-type serine protease inhibitor homolog beta-bungarotoxin B1 chain of Bungarus candidus (Malayan krait).